Here is a 318-residue protein sequence, read N- to C-terminus: 4-hydroxy-3-methylbut-2-enyl diphosphate reductase (318 aa).

C12 contacts [4Fe-4S] cluster. Residues H41 and H74 each coordinate (2E)-4-hydroxy-3-methylbut-2-enyl diphosphate. The dimethylallyl diphosphate site is built by H41 and H74. Residues H41 and H74 each coordinate isopentenyl diphosphate. C96 provides a ligand contact to [4Fe-4S] cluster. H124 is a binding site for (2E)-4-hydroxy-3-methylbut-2-enyl diphosphate. Residue H124 coordinates dimethylallyl diphosphate. Residue H124 participates in isopentenyl diphosphate binding. The active-site Proton donor is E126. T168 contacts (2E)-4-hydroxy-3-methylbut-2-enyl diphosphate. C198 is a binding site for [4Fe-4S] cluster. The (2E)-4-hydroxy-3-methylbut-2-enyl diphosphate site is built by S226, S227, N228, and S270. Dimethylallyl diphosphate-binding residues include S226, S227, N228, and S270. Isopentenyl diphosphate contacts are provided by S226, S227, N228, and S270.

This sequence belongs to the IspH family. The cofactor is [4Fe-4S] cluster.

It catalyses the reaction isopentenyl diphosphate + 2 oxidized [2Fe-2S]-[ferredoxin] + H2O = (2E)-4-hydroxy-3-methylbut-2-enyl diphosphate + 2 reduced [2Fe-2S]-[ferredoxin] + 2 H(+). The catalysed reaction is dimethylallyl diphosphate + 2 oxidized [2Fe-2S]-[ferredoxin] + H2O = (2E)-4-hydroxy-3-methylbut-2-enyl diphosphate + 2 reduced [2Fe-2S]-[ferredoxin] + 2 H(+). It participates in isoprenoid biosynthesis; dimethylallyl diphosphate biosynthesis; dimethylallyl diphosphate from (2E)-4-hydroxy-3-methylbutenyl diphosphate: step 1/1. It functions in the pathway isoprenoid biosynthesis; isopentenyl diphosphate biosynthesis via DXP pathway; isopentenyl diphosphate from 1-deoxy-D-xylulose 5-phosphate: step 6/6. Its function is as follows. Catalyzes the conversion of 1-hydroxy-2-methyl-2-(E)-butenyl 4-diphosphate (HMBPP) into a mixture of isopentenyl diphosphate (IPP) and dimethylallyl diphosphate (DMAPP). Acts in the terminal step of the DOXP/MEP pathway for isoprenoid precursor biosynthesis. This is 4-hydroxy-3-methylbut-2-enyl diphosphate reductase from Psychrobacter arcticus (strain DSM 17307 / VKM B-2377 / 273-4).